The sequence spans 166 residues: Urease accessory protein UreE (166 aa).

Belongs to the UreE family.

Its subcellular location is the cytoplasm. In terms of biological role, involved in urease metallocenter assembly. Binds nickel. Probably functions as a nickel donor during metallocenter assembly. The protein is Urease accessory protein UreE of Pseudomonas savastanoi pv. phaseolicola (strain 1448A / Race 6) (Pseudomonas syringae pv. phaseolicola (strain 1448A / Race 6)).